The sequence spans 964 residues: Chromatin assembly factor 1 subunit A (964 aa).

The tract at residues 1-49 (MLEEPECGAPGARGEAAAMDCKDRPAFPVKKLIQARLPFKRLNLVPKEK) is binds to PCNA. The segment at 1–316 (MLEEPECGAP…LHTGPSPFPA (316 aa)) is binds to CBX1 chromo shadow domain. Phosphoserine occurs at positions 126, 141, and 144. Residues 146 to 232 (AQKNINGVPD…KDRDGWSEAG (87 aa)) form a disordered region. Basic and acidic residues predominate over residues 156–172 (KAGDDRGLPKARQKDEL). A Glycyl lysine isopeptide (Lys-Gly) (interchain with G-Cter in SUMO1); alternate cross-link involves residue Lys185. Lys185 participates in a covalent cross-link: Glycyl lysine isopeptide (Lys-Gly) (interchain with G-Cter in SUMO2); alternate. Residues 236–249 (FKGKMPVVVLQDIL) carry the PxVxL motif motif. Disordered regions lie at residues 253 to 437 (PPAR…REEE) and 601 to 641 (DSDE…VPHG). A compositionally biased stretch (low complexity) spans 284–298 (LSHSSLSSSSPTSSP). Position 312 is a phosphoserine (Ser312). Residues 329-453 (RGSAEKNKMK…KAEITRFFQK (125 aa)) are a coiled coil. Over residues 331-437 (SAEKNKMKLQ…EEEKRLREEE (107 aa)) the composition is skewed to basic and acidic residues. Composition is skewed to acidic residues over residues 601–612 (DSDEEWEEEEPG) and 620–635 (GDDDDDVGEDEDEDDG). The segment at 644–680 (SEDEGVTEECADPENHKVRQKLKAKEWDEFLAKGKRF) is necessary for homodimerization and competence for chromatin assembly. Residues 662 to 964 (RQKLKAKEWD…FVSPSSLRLS (303 aa)) are binds to p60. A Phosphothreonine modification is found at Thr723. Positions 769–799 (RDAGSPEDSAASPPSPGPARPQTPTASEDVA) are disordered. A compositionally biased stretch (low complexity) spans 770–780 (DAGSPEDSAAS). A phosphoserine mark is found at Ser773, Ser783, Ser811, Ser876, and Ser881. The disordered stretch occupies residues 859–878 (EDSGSVPAPGPGQGMPVSLK). 2 disordered regions span residues 897-920 (DGQVGTGDLDDFQADTEEEDDDEG) and 933-964 (IQAPCGTTSGAGGSVGMDTSESFVSPSSLRLS). Residues 904–920 (DLDDFQADTEEEDDDEG) show a composition bias toward acidic residues. Residues 949–964 (MDTSESFVSPSSLRLS) show a composition bias toward polar residues. Position 959 is a phosphoserine (Ser959).

Belongs to the CHAF1A family. As to quaternary structure, homodimer. Part of the CAF-1 complex that contains RBBP4, CHAF1B and CHAF1A. CHAF1A binds directly to CHAF1B. Only minor amounts of RBBP4 are complexed with CHAF1A and CHAF1B in G1 phase. Interacts with PCNA; the interaction is direct. Interacts (via the PxVxL motif) with CBX5; the interaction is direct. Interacts with MBD1. Interacts with histones H3.1, H3.2 and H3.1t.

The protein resides in the nucleus. Acts as a component of the histone chaperone complex chromatin assembly factor 1 (CAF-1), which assembles histone octamers onto DNA during replication and repair. CAF-1 performs the first step of the nucleosome assembly process, bringing newly synthesized histones H3 and H4 to replicating DNA; histones H2A/H2B can bind to this chromatin precursor subsequent to DNA replication to complete the histone octamer. It may play a role in heterochromatin maintenance in proliferating cells by bringing newly synthesized cbx proteins to heterochromatic DNA replication foci. This Bos taurus (Bovine) protein is Chromatin assembly factor 1 subunit A (CHAF1A).